The chain runs to 434 residues: Protein maelstrom homolog (434 aa).

Positions 4–73 (RRASRNAYYF…AQGKDSGPSE (70 aa)) form a DNA-binding region, HMG box.

This sequence belongs to the maelstrom family. In terms of assembly, interacts with SMARCB1, SIN3B and DDX4. Interacts with piRNA-associated proteins TDRD1, PIWIL1 and PIWIL2. Interacts with Tex19.1 and, probably, Tex19.2. In terms of tissue distribution, testis-specific. Present in spermatocytes and round and early elongating spermatids.

The protein localises to the cytoplasm. It is found in the nucleus. Functionally, plays a central role during spermatogenesis by repressing transposable elements and preventing their mobilization, which is essential for the germline integrity. Acts via the piRNA metabolic process, which mediates the repression of transposable elements during meiosis by forming complexes composed of piRNAs and Piwi proteins and governs the methylation and subsequent repression of transposons. Its association with piP-bodies suggests a participation in the secondary piRNAs metabolic process. Required for the localization of germ-cell factors to the meiotic nuage. The polypeptide is Protein maelstrom homolog (Mus musculus (Mouse)).